Here is a 306-residue protein sequence, read N- to C-terminus: Small ribosomal subunit protein uS2 (306 aa).

At serine 2 the chain carries N-acetylserine. Laminin-binding regions lie at residues isoleucine 161–arginine 180 and arginine 205–glycine 229. 5 [DE]-W-[ST] repeats span residues glutamate 230–threonine 232, aspartate 245–serine 247, aspartate 276–serine 278, aspartate 286–serine 288, and glutamate 304–serine 306. The interval glutamate 242–serine 306 is laminin-binding. The tract at residues proline 261–serine 306 is disordered. The segment covering tryptophan 277–serine 306 has biased composition (polar residues).

It belongs to the universal ribosomal protein uS2 family. As to quaternary structure, monomer (37LRP) and homodimer (67LR). Component of the small ribosomal subunit. Mature ribosomes consist of a small (40S) and a large (60S) subunit. The 40S subunit contains about 33 different proteins and 1 molecule of RNA (18S). The 60S subunit contains about 49 different proteins and 3 molecules of RNA (28S, 5.8S and 5S). Interacts with rps21. Interacts with several laminins including at least lamb1. Interacts with mdk. Post-translationally, acylated. Acylation may be a prerequisite for conversion of the monomeric 37 kDa laminin receptor precursor (37LRP) to the mature dimeric 67 kDa laminin receptor (67LR), and may provide a mechanism for membrane association. In terms of processing, cleaved by stromelysin-3 (ST3) at the cell surface. Cleavage by stromelysin-3 may be a mechanism to alter cell-extracellular matrix interactions.

Its subcellular location is the cell membrane. The protein resides in the cytoplasm. It localises to the nucleus. In terms of biological role, required for the assembly and/or stability of the 40S ribosomal subunit. Required for the processing of the 20S rRNA-precursor to mature 18S rRNA in a late step of the maturation of 40S ribosomal subunits. Also functions as a cell surface receptor for laminin. Plays a role in cell adhesion to the basement membrane and in the consequent activation of signaling transduction pathways. May play a role in cell fate determination and tissue morphogenesis. This Xenopus tropicalis (Western clawed frog) protein is Small ribosomal subunit protein uS2 (rpsa).